The chain runs to 618 residues: 1-deoxy-D-xylulose-5-phosphate synthase (618 aa).

Residues H70 and 111 to 113 (GHS) each bind thiamine diphosphate. Residue D142 coordinates Mg(2+). Residues 143 to 144 (GS), N171, Y278, and E360 contribute to the thiamine diphosphate site. N171 serves as a coordination point for Mg(2+).

The protein belongs to the transketolase family. DXPS subfamily. As to quaternary structure, homodimer. Mg(2+) serves as cofactor. Thiamine diphosphate is required as a cofactor.

The enzyme catalyses D-glyceraldehyde 3-phosphate + pyruvate + H(+) = 1-deoxy-D-xylulose 5-phosphate + CO2. The protein operates within metabolic intermediate biosynthesis; 1-deoxy-D-xylulose 5-phosphate biosynthesis; 1-deoxy-D-xylulose 5-phosphate from D-glyceraldehyde 3-phosphate and pyruvate: step 1/1. Its function is as follows. Catalyzes the acyloin condensation reaction between C atoms 2 and 3 of pyruvate and glyceraldehyde 3-phosphate to yield 1-deoxy-D-xylulose-5-phosphate (DXP). This Helicobacter pylori (strain ATCC 700392 / 26695) (Campylobacter pylori) protein is 1-deoxy-D-xylulose-5-phosphate synthase.